A 722-amino-acid polypeptide reads, in one-letter code: ORC ubiquitin ligase 1 (722 aa).

The segment at 18 to 56 adopts an RING-type; degenerate zinc-finger fold; the sequence is CHICLGKVRQPVVCTNNHVFCSICIDLWLKNNSQCPACR. Coiled-coil stretches lie at residues 87–129 and 157–267; these read LRKT…TILD and VVEW…KEDV. Position 210 is a phosphoserine (Ser210). The tract at residues 273-359 is disordered; that stretch reads RAPSADSKGP…RLGARETPMD (87 aa). Over residues 302 to 319 the composition is skewed to low complexity; it reads AGSASASHLASPSSSRLA. Residues 323 to 338 show a composition bias toward polar residues; the sequence is SVRQESTSRTEPNCPQ. The span at 339–359 shows a compositional bias: basic and acidic residues; the sequence is NKDRYPKPTEPRLGARETPMD. 5 positions are modified to phosphoserine: Ser522, Ser549, Ser557, Ser564, and Ser566. The span at 541 to 555 shows a compositional bias: polar residues; that stretch reads MSESDNSKSPCNNGF. Disordered regions lie at residues 541–585 and 691–722; these read MSES…GSKL and VPEK…ATKS. The segment covering 571–581 has biased composition (basic and acidic residues); it reads EFLEEPDKLQE. Polar residues predominate over residues 698 to 722; the sequence is NGNQSTKRKIQSSLANASPSKATKS. Phosphoserine occurs at positions 715 and 717.

Associates with ORC complex. Binds to chromatin; association is cell cycle-regulated, absent from mitotic chromosomes, is associated with chromatin from G1 and partially released from chromatin from mid S-phase. Auto-ubiquitinated.

It is found in the chromosome. The enzyme catalyses S-ubiquitinyl-[E2 ubiquitin-conjugating enzyme]-L-cysteine + [acceptor protein]-L-lysine = [E2 ubiquitin-conjugating enzyme]-L-cysteine + N(6)-ubiquitinyl-[acceptor protein]-L-lysine.. Its function is as follows. E3 ubiquitin ligase essential for DNA replication origin activation during S phase. Acts as a replication origin selector which selects the origins to be fired and catalyzes the multi-mono-ubiquitination of a subset of chromatin-bound ORC3 and ORC5 during S-phase. This chain is ORC ubiquitin ligase 1, found in Mus musculus (Mouse).